Consider the following 344-residue polypeptide: Adenosine kinase 1 (344 aa).

Asp299 is a catalytic residue.

It belongs to the carbohydrate kinase PfkB family. In terms of assembly, interacts with the begomovirus AL2 protein and the curtovirus L2 protein. Mg(2+) serves as cofactor. Widely expressed.

It catalyses the reaction adenosine + ATP = AMP + ADP + H(+). Its pathway is purine metabolism; AMP biosynthesis via salvage pathway; AMP from adenosine: step 1/1. Inactivated by the begomovirus AL2 protein or the curtovirus L2 protein. Functionally, ATP dependent phosphorylation of adenosine and other related nucleoside analogs to monophosphate derivatives. Essential to sustain methyl recycling. The protein is Adenosine kinase 1 of Arabidopsis thaliana (Mouse-ear cress).